A 209-amino-acid chain; its full sequence is FK506-binding protein 2B (209 aa).

The signal sequence occupies residues 1–19; the sequence is MRFSLLALLGTIVATSVSA. Residues 47 to 136 enclose the PPIase FKBP-type domain; sequence GDELSMHYTG…VFEVELLEIK (90 aa). A helical transmembrane segment spans residues 157 to 177; it reads FTSPSFLVSTGIIVALFLIVF. Positions 178–207 form a coiled coil; sequence KMAKKQDIAEANEKAAAATAEASTEKKEEK. Residues 190-209 are disordered; the sequence is EKAAAATAEASTEKKEEKKE. Residues 200-209 are compositionally biased toward basic and acidic residues; it reads STEKKEEKKE.

This sequence belongs to the FKBP-type PPIase family. FKBP2 subfamily.

The protein localises to the membrane. It catalyses the reaction [protein]-peptidylproline (omega=180) = [protein]-peptidylproline (omega=0). With respect to regulation, inhibited by both FK506 and rapamycin. PPIases accelerate the folding of proteins. It catalyzes the cis-trans isomerization of proline imidic peptide bonds in oligopeptides. The sequence is that of FK506-binding protein 2B (FKBP3) from Rhizopus delemar (strain RA 99-880 / ATCC MYA-4621 / FGSC 9543 / NRRL 43880) (Mucormycosis agent).